The primary structure comprises 109 residues: Small ribosomal subunit protein bS6 (109 aa).

The protein belongs to the bacterial ribosomal protein bS6 family.

Its function is as follows. Binds together with bS18 to 16S ribosomal RNA. The sequence is that of Small ribosomal subunit protein bS6 from Anaplasma phagocytophilum (strain HZ).